Reading from the N-terminus, the 408-residue chain is Homogentisate geranylgeranyltransferase (408 aa).

A chloroplast-targeting transit peptide spans 1-62; sequence MQAVTAAAAA…TVMHKFSAIS (62 aa). Transmembrane regions (helical) follow at residues 122–142, 156–176, 194–214, 221–241, 248–268, 286–306, 329–349, 352–372, and 386–406; these read HTIF…MKSI, ALTA…LYDI, SVAT…SIGI, LMCA…EAPF, ALLA…LAFF, LVFA…FKDI, VYQL…LVGA, TNLF…LTLW, and VTSF…LIPF.

Belongs to the UbiA prenyltransferase family. In terms of tissue distribution, expressed in seeds.

It localises to the plastid. The protein localises to the chloroplast membrane. The enzyme catalyses homogentisate + (2E,6E,10E)-geranylgeranyl diphosphate + H(+) = 6-geranylgeranyl-2-methylbenzene-1,4-diol + CO2 + diphosphate. It participates in cofactor biosynthesis; tocopherol biosynthesis. Its function is as follows. Involved in the synthesis of tocotrienol (vitamin E). Catalyzes the condensation of homogentisate and geranylgeranyl diphosphate to form 2-methyl-6-geranylgeranylbenzoquinol. Possesses low activity with phytyl diphosphate as substrate. The chain is Homogentisate geranylgeranyltransferase from Hordeum vulgare (Barley).